A 250-amino-acid polypeptide reads, in one-letter code: Flavin-dependent thymidylate synthase (250 aa).

One can recognise a ThyX domain in the interval 7–233 (LRVQLIAKTD…PAVFADFEIA (227 aa)). FAD-binding positions include Ser-71, 95 to 97 (RHR), and Gln-103. DUMP-binding positions include 92–95 (ELIR), 103–107 (QLSQR), and Arg-172. Positions 95–105 (RHRHFSYSQLS) match the ThyX motif motif. FAD-binding positions include 188–190 (NYR) and His-194. Residue Arg-199 participates in dUMP binding. The active-site Involved in ionization of N3 of dUMP, leading to its activation is the Arg-199.

This sequence belongs to the thymidylate synthase ThyX family. In terms of assembly, homotetramer. It depends on FAD as a cofactor.

It carries out the reaction dUMP + (6R)-5,10-methylene-5,6,7,8-tetrahydrofolate + NADPH + H(+) = dTMP + (6S)-5,6,7,8-tetrahydrofolate + NADP(+). Its pathway is pyrimidine metabolism; dTTP biosynthesis. Catalyzes the reductive methylation of 2'-deoxyuridine-5'-monophosphate (dUMP) to 2'-deoxythymidine-5'-monophosphate (dTMP) while utilizing 5,10-methylenetetrahydrofolate (mTHF) as the methyl donor, and NADPH and FADH(2) as the reductant. The sequence is that of Flavin-dependent thymidylate synthase from Mycobacterium avium (strain 104).